The following is a 380-amino-acid chain: Flagellar P-ring protein (380 aa).

The first 35 residues, 1-35 (MRFFTQSPFPLRTLTRRLTAFVCVGLLLLPGFTLA), serve as a signal peptide directing secretion.

The protein belongs to the FlgI family. As to quaternary structure, the basal body constitutes a major portion of the flagellar organelle and consists of four rings (L,P,S, and M) mounted on a central rod.

The protein localises to the periplasm. Its subcellular location is the bacterial flagellum basal body. In terms of biological role, assembles around the rod to form the L-ring and probably protects the motor/basal body from shearing forces during rotation. The polypeptide is Flagellar P-ring protein (Gluconobacter oxydans (strain 621H) (Gluconobacter suboxydans)).